Consider the following 792-residue polypeptide: Zinc finger protein 606 (792 aa).

The KRAB domain maps to 62–133; the sequence is VTFKDVAVDF…EQACPQRTCP (72 aa). The C2H2-type 1; degenerate zinc finger occupies 289 to 311; that stretch reads FKCTDAVKSFNHIIHFGDHKGIH. A C2H2-type 2; degenerate zinc finger spans residues 317–344; sequence YEYKECHQIFNQSPSFNEHPRLHVGENQ. A C2H2-type 3; degenerate zinc finger spans residues 400 to 422; it reads YDYNECGTSFIWSSYLIQHKKTH. C2H2-type zinc fingers lie at residues 428–450, 456–478, 484–506, 512–534, 540–562, 568–590, 596–618, 624–646, 652–674, 680–702, 708–730, 736–758, and 764–786; these read YECD…ERTH, YECN…KRIH, YVCN…QRTH, FECT…MRMH, FKCD…ERTH, YKCT…QRTH, YNCQ…EIIH, YECN…QRTH, YECN…RRIH, YKCN…RRTH, YRCN…LRNH, YKCN…QRMH, and FICS…QRNH.

It belongs to the krueppel C2H2-type zinc-finger protein family. As to expression, widely expressed in adult and fetal tissues.

It is found in the nucleus. In terms of biological role, may act as a transcriptional repressor. The sequence is that of Zinc finger protein 606 (ZNF606) from Homo sapiens (Human).